Reading from the N-terminus, the 746-residue chain is Exostosin-1 (746 aa).

At 1-7 (MQAKKRY) the chain is on the cytoplasmic side. The helical; Signal-anchor for type II membrane protein transmembrane segment at 8-28 (FILLSAGSCLALLFYFGGLQF) threads the bilayer. Topologically, residues 29–746 (RASRSHSRRE…RKKYRDIERL (718 aa)) are lumenal. The N-linked (GlcNAc...) asparagine glycan is linked to Asn89. 2 disulfides stabilise this stretch: Cys98-Cys103 and Cys109-Cys152. Residues Leu166 and Tyr203 each coordinate a protein. 4 residues coordinate UDP: Lys267, Lys269, Tyr271, and Arg280. An intrachain disulfide couples Cys298 to Cys312. Residue His300 coordinates a protein. Residues Tyr319 and Tyr324 each coordinate UDP. Asn330 carries an N-linked (GlcNAc...) asparagine glycan. Cystine bridges form between Cys334/Cys355 and Cys652/Cys704. Residues Arg346 and Glu349 each coordinate UDP.

It belongs to the glycosyltransferase 47 family. In terms of assembly, part of the heparan sulfate polymerase, a dimeric complex composed of EXT1 and EXT2. Could also form homooligomeric complexes. Interacts with NDST1. N-glycosylated.

The protein localises to the golgi apparatus membrane. It localises to the golgi apparatus. The protein resides in the cis-Golgi network membrane. It is found in the endoplasmic reticulum membrane. The catalysed reaction is 3-O-{alpha-D-GlcNAc-[(1-&gt;4)-beta-D-GlcA-(1-&gt;4)-alpha-D-GlcNAc](n)-(1-&gt;4)-beta-D-GlcA-(1-&gt;3)-beta-D-Gal-(1-&gt;3)-beta-D-Gal-(1-&gt;4)-beta-D-Xyl}-L-seryl-[protein] + UDP-alpha-D-glucuronate = 3-O-{[(1-&gt;4)-beta-D-GlcA-(1-&gt;4)-alpha-D-GlcNAc](n+1)-(1-&gt;4)-beta-D-GlcA-(1-&gt;3)-beta-D-Gal-(1-&gt;3)-beta-D-Gal-(1-&gt;4)-beta-D-Xyl}-L-seryl-[protein] + UDP + H(+). It functions in the pathway protein modification; protein glycosylation. Its function is as follows. Glycosyltransferase forming with EXT2 the heterodimeric heparan sulfate polymerase which catalyzes the elongation of the heparan sulfate glycan backbone. Glycan backbone extension consists in the alternating transfer of (1-&gt;4)-beta-D-GlcA and (1-&gt;4)-alpha-D-GlcNAc residues from their respective UDP-sugar donors. Both EXT1 and EXT2 are required for the full activity of the polymerase since EXT1 bears the N-acetylglucosaminyl-proteoglycan 4-beta-glucuronosyltransferase activity within the complex while EXT2 carries the glucuronosyl-N-acetylglucosaminyl-proteoglycan 4-alpha-N-acetylglucosaminyltransferase activity. Heparan sulfate proteoglycans are ubiquitous components of the extracellular matrix and play an important role in tissue homeostasis and signaling. This Pongo abelii (Sumatran orangutan) protein is Exostosin-1 (EXT1).